The primary structure comprises 506 residues: MFSLQDLCRKNLFLPLEPLGKHVVQRLGLYWEGHGSVKRVGDCFVCVDQIWVLPTHKAVQIAASEGNEDIVKLFLLWKGSLQYAIIGALEGRQYDLIQKYYNQIGDCHQILPLIQDPEIYERCHELNVTCTFQCLFQHAIRDNMLPIFQKYGEDLNGNRGMVQLLYEMACRLQNYDIIKWIGFNLHVYNLEAIFSIAFVRKDLTLYSLGYMLLLGRMSTVDRNFISIITRHLEYASKKGLFDFVLESLKYGGQVDTVLFQAVKYNHRKILAHFIHEIPRETVEKLILHAVESRASRKTFNLLLSSINYCVNPFVKKLLHAVVKHKYMLIIKLLLERPKKKINLVDAALFKLVKYSTYKEIVKYMDEFSVDPKRVVKMAARLMRVDLIKKISNDAWEDKLERIKHLKQMVNTMNHRNGKNLLMYNIHNITGYTHLNTKEAFNLTKFYAVHNATCLFKEMCKSCFEHDKIQFRELLEDCLHIANRHAYIQIAETADECIKYIDLITPK.

ANK repeat units follow at residues Pro54–Tyr83, Gln253–Glu283, and Phe313–Leu343.

It belongs to the asfivirus MGF 505 family.

Its function is as follows. Plays a role in virus cell tropism, and may be required for efficient virus replication in macrophages. The protein is Protein MGF 505-9R of Ornithodoros (relapsing fever ticks).